We begin with the raw amino-acid sequence, 297 residues long: Trimeric intracellular cation channel type A (297 aa).

Over 1–18 (MDLISSLSLGELALSFSR) the chain is Lumenal. The chain crosses the membrane as a helical span at residues 19–39 (VPLFPVFDLSYFIVSIIYLKY). Residues 40 to 51 (EPGSVELSRRHP) are Cytoplasmic-facing. A helical membrane pass occupies residues 52–72 (VASWLCAMLHCFGSYILADLL). At 73 to 85 (LGEPIIDYFSNSS) the chain is on the lumenal side. G74 serves as a coordination point for Ca(2+). The helical transmembrane segment at 86-106 (SILLASGVWYLIFFCPLDLFY) threads the bilayer. Topologically, residues 107-143 (KCVCFLPVKLIFVAMKEVVRVRKIAVGIHHAHHYHHG) are cytoplasmic. Residues K122 and R126 each coordinate a 1,2-diacyl-sn-glycero-3-phospho-(1D-myo-inositol-4,5-bisphosphate). The chain crosses the membrane as a helical span at residues 144–164 (WFIMIATGWVKGSGVALLSNL). The Lumenal portion of the chain corresponds to 165-177 (EQLLRGVWKPETN). The helical transmembrane segment at 178-198 (EILHMSFPTKASLYGAILFTL) threads the bilayer. Over 199 to 208 (QQTRWLPVSK) the chain is Cytoplasmic. A helical membrane pass occupies residues 209–229 (ASLIFVFTMFMVSCKVFLTAT). The Lumenal segment spans residues 230 to 233 (HSHS). The chain crosses the membrane as a helical span at residues 234–254 (SPFDVLEGYICPVLFGATWGG). The Cytoplasmic portion of the chain corresponds to 255–297 (DHHHDNHGAPHGMGLGTQHSGLPAKAKEELSEGFRKKKTKKAD). Residues 259–297 (DNHGAPHGMGLGTQHSGLPAKAKEELSEGFRKKKTKKAD) form a disordered region. A compositionally biased stretch (basic and acidic residues) spans 279–288 (KAKEELSEGF).

Belongs to the TMEM38 family. Homotrimer; conformation seems to be controled by binding to diacylglycerol (DAG).

The protein resides in the sarcoplasmic reticulum membrane. It is found in the nucleus membrane. It catalyses the reaction K(+)(in) = K(+)(out). Channel activity is activated by a change of voltage within the sarcoplasmic reticulum lumen and blocked by luminal high Ca(2+) levels. Its function is as follows. Intracellular monovalent cation channel required for maintenance of rapid intracellular calcium release. Acts as a potassium counter-ion channel that functions in synchronization with calcium release from intracellular stores. Opened by a change of voltage within the sarcoplasmic reticulum lumen. The protein is Trimeric intracellular cation channel type A of Rattus norvegicus (Rat).